An 865-amino-acid polypeptide reads, in one-letter code: Protein translocase subunit SecA (865 aa).

ATP contacts are provided by residues Gln85, 103–107 (GEGKT), and Asp505. 4 residues coordinate Zn(2+): Cys847, Cys849, Cys858, and His859.

This sequence belongs to the SecA family. In terms of assembly, monomer and homodimer. Part of the essential Sec protein translocation apparatus which comprises SecA, SecYEG and auxiliary proteins SecDF. Other proteins may also be involved. The cofactor is Zn(2+).

It is found in the cell membrane. The protein localises to the cytoplasm. It catalyses the reaction ATP + H2O + cellular proteinSide 1 = ADP + phosphate + cellular proteinSide 2.. Part of the Sec protein translocase complex. Interacts with the SecYEG preprotein conducting channel. Has a central role in coupling the hydrolysis of ATP to the transfer of proteins into and across the cell membrane, serving as an ATP-driven molecular motor driving the stepwise translocation of polypeptide chains across the membrane. The polypeptide is Protein translocase subunit SecA (Lactococcus lactis subsp. cremoris (strain SK11)).